We begin with the raw amino-acid sequence, 598 residues long: MDSYDLFRRLGAGAKFDVKRFSADATRFQVGKRKFDSESLEVLKGLDFFGNKKSVSDECGALQIHQEPPNEEKTQGVLLERSKEPKKKKRKKMTSEVPAQEDFDGGIQWTSSVEAKLQDEKVSGEKKLTSGKLEHLRKEKVNFFRNKHKIHVQGTDLPDPIATFQQLDQEYKINSRLLQNILDAGFQVPTPIQMQAIPVMLHGRELLASAPTGSGKTLAFSIPILMQLKQPTNKGFRALVISPTRELASQIHRELIKISEGTGFRIHMIHKAAIAAKKFGPKSSKKFDILVTTPNRLIYLLKQDPPGIDLTNVEWLVVDESDKLFEDGKTGFREQLASIFLACTSPKVRRAMFSATFAYDVEQWCKLNLDNVVSVSIGARNSAVETVEQELLFVGSETGKLLAMRELVKKGFKPPVLVFVQSIERAKELFHELIYEGINVDVIHAERTQQQRDNTVHSFRAGKIWVLICTALLARGIDFKGVNLVINYDFPTSSVEYIHRIGRTGRAGNRGKAVTFFTEDDKPLLRSVANVIQQAGCPVPEYIKGFQKLLSKQKKKMIKKPLERESICTTPKYFLEQAKQKKVAGQNSKKKETLKEKS.

Lysine 15 carries the N6-acetyllysine modification. Serine 39 bears the Phosphoserine mark. The Q motif signature appears at 166-194 (QLDQEYKINSRLLQNILDAGFQVPTPIQM). In terms of domain architecture, Helicase ATP-binding spans 197-375 (IPVMLHGREL…KLNLDNVVSV (179 aa)). An ATP-binding site is contributed by 210–217 (APTGSGKT). The DEAD box motif lies at 319 to 322 (DESD). The region spanning 386–547 (TVEQELLFVG…PVPEYIKGFQ (162 aa)) is the Helicase C-terminal domain.

It belongs to the DEAD box helicase family. DDX52/ROK1 subfamily.

It localises to the nucleus. The protein localises to the nucleolus. It carries out the reaction ATP + H2O = ADP + phosphate + H(+). Its function is as follows. Required for efficient ribosome biogenesis. May control cell cycle progression by regulating translation of mRNAs that contain a terminal oligo pyrimidine (TOP) motif in their 5' UTRs, such as GTPBP4. This Mus musculus (Mouse) protein is Probable ATP-dependent RNA helicase DDX52 (Ddx52).